Consider the following 533-residue polypeptide: Aspartic proteinase sxa1 (533 aa).

The signal sequence occupies residues 1 to 23 (MKASFFVFAISALQALQASVASA). Residues 76–434 (YFANLTLGSN…DWDAQKIGLA (359 aa)) form the Peptidase A1 domain. Asparagine 79 carries N-linked (GlcNAc...) asparagine glycosylation. Aspartate 94 is a catalytic residue. Residues asparagine 106, asparagine 138, asparagine 153, asparagine 166, asparagine 271, asparagine 278, asparagine 299, and asparagine 319 are each glycosylated (N-linked (GlcNAc...) asparagine). The active site involves aspartate 325. A glycan (N-linked (GlcNAc...) asparagine) is linked at asparagine 439.

Belongs to the peptidase A1 family.

In terms of biological role, involved in degradation or processing of the mating pheromones. Its loss may cause a persistent response to the pheromones. It may cleave the mating pheromone M-factor. May be involved in processing of zymogens that are required for zygote formation. The chain is Aspartic proteinase sxa1 (sxa1) from Schizosaccharomyces pombe (strain 972 / ATCC 24843) (Fission yeast).